We begin with the raw amino-acid sequence, 200 residues long: Type 1 fimbriae regulatory protein FimB (200 aa).

The region spanning 8-189 is the Tyr recombinase domain; it reads KKRNFLTHSE…NAGRFYGIWD (182 aa). Residues Arg-47, Lys-72, His-141, Arg-144, and His-167 contribute to the active site. Tyr-176 acts as the O-(3'-phospho-DNA)-tyrosine intermediate in catalysis.

It belongs to the 'phage' integrase family.

In terms of biological role, fimB is one of the 2 regulatory proteins which control the phase variation of type 1 fimbriae in E.coli. These proteins mediate the periodic inversion of a 300bp DNA segment that harbors the promoter for the fimbrial structural gene, fimA. FimB switches fimA on. The sequence is that of Type 1 fimbriae regulatory protein FimB (fimB) from Escherichia coli O157:H7.